Reading from the N-terminus, the 624-residue chain is Ferredoxin-fold anticodon-binding domain-containing protein 1 (624 aa).

Residues 531 to 624 form the FDX-ACB domain; the sequence is LYPPCYVHDV…IQQHLYVIPR (94 aa).

This Homo sapiens (Human) protein is Ferredoxin-fold anticodon-binding domain-containing protein 1 (FDXACB1).